The primary structure comprises 284 residues: Nucleoid occlusion protein (284 aa).

Positions 143 to 162 (EALAQRVGKSQSAIANKMRL) form a DNA-binding region, H-T-H motif.

This sequence belongs to the ParB family.

It is found in the cytoplasm. The protein resides in the nucleoid. In terms of biological role, effects nucleoid occlusion by binding relatively nonspecifically to DNA and preventing the assembly of the division machinery in the vicinity of the nucleoid, especially under conditions that disturb the cell cycle. It helps to coordinate cell division and chromosome segregation by preventing the formation of the Z ring through the nucleoid, which would cause chromosome breakage. In Listeria monocytogenes serovar 1/2a (strain ATCC BAA-679 / EGD-e), this protein is Nucleoid occlusion protein.